Consider the following 247-residue polypeptide: 5'-nucleotidase SurE (247 aa).

4 residues coordinate a divalent metal cation: aspartate 8, aspartate 9, serine 39, and asparagine 91.

It belongs to the SurE nucleotidase family. The cofactor is a divalent metal cation.

It is found in the cytoplasm. It carries out the reaction a ribonucleoside 5'-phosphate + H2O = a ribonucleoside + phosphate. Its function is as follows. Nucleotidase that shows phosphatase activity on nucleoside 5'-monophosphates. This is 5'-nucleotidase SurE from Nitrosomonas eutropha (strain DSM 101675 / C91 / Nm57).